The sequence spans 1288 residues: Structural maintenance of chromosomes protein 4 (1288 aa).

Positions 1 to 10 are enriched in polar residues; that stretch reads MPRKGTQPST. Positions 1–55 are disordered; that stretch reads MPRKGTQPSTARRREEGPPPPSPDGASSDAEPEPPSGRTESPATAAETASEELDN. Phosphoserine is present on residues serine 22 and serine 28. Position 39 is a phosphothreonine (threonine 39). A compositionally biased stretch (low complexity) spans 39–48; that stretch reads TESPATAAET. Residues serine 41 and serine 50 each carry the phosphoserine modification. 113 to 120 contributes to the ATP binding site; that stretch reads GPNGSGKS. Position 143 is a phosphoserine (serine 143). Residues 272–588 adopt a coiled-coil conformation; sequence RRVEILNEHR…LFQKVEEAKS (317 aa). An N6-acetyllysine mark is found at lysine 381 and lysine 679. Residues 613–727 form the SMC hinge domain; it reads PGIYGRLGDL…ADNLDQATRV (115 aa). Positions 767–1020 form a coiled coil; the sequence is LVIEISEEEV…ALSIKLKLEQ (254 aa). Phosphoserine is present on residues serine 982 and serine 1056. Residues 1109 to 1129 are a coiled coil; it reads ELDKITYERDSFRQAYEDLRK.

The protein belongs to the SMC family. SMC4 subfamily. In terms of assembly, forms a heterodimer with SMC2. Component of the condensin complex, which contains the SMC2 and SMC4 heterodimer, and three non SMC subunits that probably regulate the complex: BRRN1/CAPH, CNAP1/CAPD2 and CAPG. Widely expressed. Higher expression in testis, colon, thymus.

Its subcellular location is the nucleus. The protein localises to the cytoplasm. The protein resides in the chromosome. Its function is as follows. Central component of the condensin complex, a complex required for conversion of interphase chromatin into mitotic-like condense chromosomes. The condensin complex probably introduces positive supercoils into relaxed DNA in the presence of type I topoisomerases and converts nicked DNA into positive knotted forms in the presence of type II topoisomerases. The polypeptide is Structural maintenance of chromosomes protein 4 (SMC4) (Homo sapiens (Human)).